A 272-amino-acid chain; its full sequence is HMP-PP phosphatase (272 aa).

Catalysis depends on Asp-8, which acts as the Nucleophile. 3 residues coordinate Mg(2+): Asp-8, Asp-10, and Asp-212.

The protein belongs to the HAD-like hydrolase superfamily. Cof family. Mg(2+) is required as a cofactor.

The enzyme catalyses 4-amino-2-methyl-5-(diphosphooxymethyl)pyrimidine + H2O = 4-amino-2-methyl-5-(phosphooxymethyl)pyrimidine + phosphate + H(+). Its function is as follows. Catalyzes the hydrolysis of 4-amino-2-methyl-5-hydroxymethylpyrimidine pyrophosphate (HMP-PP) to 4-amino-2-methyl-5-hydroxymethylpyrimidine phosphate (HMP-P). The protein is HMP-PP phosphatase of Cronobacter sakazakii (strain ATCC BAA-894) (Enterobacter sakazakii).